Here is a 274-residue protein sequence, read N- to C-terminus: Putative hydro-lyase Veis_4744 (274 aa).

Belongs to the D-glutamate cyclase family.

This chain is Putative hydro-lyase Veis_4744, found in Verminephrobacter eiseniae (strain EF01-2).